Here is a 275-residue protein sequence, read N- to C-terminus: Transcription regulator AOL_s00215g275 (275 aa).

Disordered regions lie at residues 13-65 (TPLP…SSIG) and 84-108 (ILQQ…RQRL). A compositionally biased stretch (polar residues) spans 14 to 26 (PLPSLNSSRSPQR). Over residues 27 to 40 (TPSLGSSSTSSLSP) the composition is skewed to low complexity. Over residues 47–60 (TPSTPESNDSGLTL) the composition is skewed to polar residues. Residues 88 to 106 (KSRHQNQPSRRHKQKNRRQ) show a composition bias toward basic residues.

Functionally, regulatory protein; part of the gene cluster that mediates the biosynthesis of sesquiterpenyl epoxy-cyclohexenoids (SECs) such as anthrobotrisins and arthrosporols, metabolites that possess a novel hybrid carbon skeleton consisting of a polyketide-derived epoxycyclohexenol combined with a terpenoid-derived monocyclic sesquiterpenol substructure (PKS-PTS hybrid). The SEC pathway plays an important role for fungal soil colonization via decreasing fungal nematode-capturing ability. AOL_s00215g275 can perform multiple functions in fungal growth and development via regulating the SEC biosynthesis, TCA cycle, and septa formation. Also involved in inhibiting conidial formation, germination, and nematicidal activity but promotes trap production. Plays a role in fungal resistances and significantly regulates the fungal morphology and responses to chemical stressors such as cell-wall-perturbing agents (SDS and Congo red), osmotic agents (NaCl and sorbitol), or the oxidant H(2)O(2). The chain is Transcription regulator AOL_s00215g275 from Arthrobotrys oligospora (strain ATCC 24927 / CBS 115.81 / DSM 1491) (Nematode-trapping fungus).